Consider the following 258-residue polypeptide: Acyl-[acyl-carrier-protein]--UDP-N-acetylglucosamine O-acyltransferase (258 aa).

Belongs to the transferase hexapeptide repeat family. LpxA subfamily. Homotrimer.

It is found in the cytoplasm. The catalysed reaction is a (3R)-hydroxyacyl-[ACP] + UDP-N-acetyl-alpha-D-glucosamine = a UDP-3-O-[(3R)-3-hydroxyacyl]-N-acetyl-alpha-D-glucosamine + holo-[ACP]. It participates in glycolipid biosynthesis; lipid IV(A) biosynthesis; lipid IV(A) from (3R)-3-hydroxytetradecanoyl-[acyl-carrier-protein] and UDP-N-acetyl-alpha-D-glucosamine: step 1/6. Functionally, involved in the biosynthesis of lipid A, a phosphorylated glycolipid that anchors the lipopolysaccharide to the outer membrane of the cell. This is Acyl-[acyl-carrier-protein]--UDP-N-acetylglucosamine O-acyltransferase from Thiobacillus denitrificans (strain ATCC 25259 / T1).